The following is a 988-amino-acid chain: Voltage-gated delayed rectifier potassium channel KCNH5 (988 aa).

Topologically, residues 1 to 217 (MPGGKRGLVA…LHYCAFKTTW (217 aa)) are cytoplasmic. Residues 12-90 (QNTFLENIVR…VRQTFDNYES (79 aa)) enclose the PAS domain. The PAC domain maps to 91–143 (NCFEVLLYKKNRTPVWFYMQIAPIRNEHEKVVLFLCTFKDITLFKQPIEDDST). The chain crosses the membrane as a helical span at residues 218–238 (DWVILILTFYTAIMVPYNVSF). Residues 239-243 (KTKQN) are Extracellular-facing. Residues 244–264 (NIAWLVLDSVVDVIFLVDIVL) traverse the membrane as a helical segment. The Cytoplasmic portion of the chain corresponds to 265–291 (NFHTTFVGPGGEVISDPKLIRMNYLKT). The helical transmembrane segment at 292–312 (WFVIDLLSCLPYDIINAFENV) threads the bilayer. Over 313-319 (DEGISSL) the chain is Extracellular. A helical; Voltage-sensor membrane pass occupies residues 320-340 (FSSLKVVRLLRLGRVARKLDH). Residues 341-346 (YLEYGA) lie on the Cytoplasmic side of the membrane. Residues 347-367 (AVLVLLVCVFGLVAHWLACIW) traverse the membrane as a helical segment. Residues 368 to 419 (YSIGDYEVIDEVTNTIQIDSWLYQLALSIGTPYRYNTSAGIWEGGPSKDSLY) lie on the Extracellular side of the membrane. An N-linked (GlcNAc...) asparagine glycan is attached at Asn403. The pore-forming intramembrane region spans 420 to 440 (VSSLYFTMTSLTTIGFGNIAP). Positions 432 to 437 (TIGFGN) match the Selectivity filter motif. Topologically, residues 441–446 (TTDVEK) are extracellular. A helical transmembrane segment spans residues 447-467 (MFSVAMMMVGSLLYATIFGNV). Topologically, residues 468 to 988 (TTIFQQMYAN…PESDKDEIHF (521 aa)) are cytoplasmic. 550 to 667 (AFRLASDGCL…NSFSRNLTLT (118 aa)) is an a nucleoside 3',5'-cyclic phosphate binding site. The calmodulin-binding stretch occupies residues 704-715 (HPVRKLFQKFKQ). The tract at residues 717-742 (KELRNQGSTQGDPERNQLQVESRSLQ) is disordered. The span at 721–742 (NQGSTQGDPERNQLQVESRSLQ) shows a compositional bias: polar residues. Residue Lys785 forms a Glycyl lysine isopeptide (Lys-Gly) (interchain with G-Cter in ubiquitin) linkage. The tract at residues 838-890 (GLLSEDPKSSDSENSVTKNPLRKTDSCDSGITKSDLRLDKAGEARSPLEHSPI) is disordered. The segment covering 871 to 885 (SDLRLDKAGEARSPL) has biased composition (basic and acidic residues). Phosphoserine is present on Ser883. The segment at 909-948 (TLQEVKHELKEDIQLLSCRMTALEKQVAEILKILSEKSVP) is CAD (involved in subunit assembly). A disordered region spans residues 969 to 988 (DIFSVSRPESPESDKDEIHF). The segment covering 977–988 (ESPESDKDEIHF) has biased composition (basic and acidic residues).

This sequence belongs to the potassium channel family. H (Eag) (TC 1.A.1.20) subfamily. Kv10.2/KCNH5 sub-subfamily. Homotetramer. The potassium channel is probably composed of a homo- or heterotetrameric complex of pore-forming alpha subunits that can associate with modulating beta subunits. Heteromultimer with KCNH1/EAG. Detected in brain, skeletal muscle, heart, placenta, lung and liver, and at low levels in kidney.

The protein localises to the membrane. It catalyses the reaction K(+)(in) = K(+)(out). Pore-forming (alpha) subunit of a voltage-gated delayed rectifier potassium channel that mediates outward-rectifying potassium currents which, on depolarization, reaches a steady-state level and do not inactivate. The kinetic is characterized by a slow activation time course and a small voltage dependence of the activation time constants, therefore, starts to open at more negative voltages. The activation kinetics depend on the prepulse potential and external divalent cation concentration. The time course of activation is biphasic with a fast and a slowly activating current component. With negative prepulses, the current activation is delayed and slowed down several fold, whereas more positive prepulses speed up activation, therefore the activation rate depends on holding potential. In Homo sapiens (Human), this protein is Voltage-gated delayed rectifier potassium channel KCNH5.